The sequence spans 900 residues: Alpha-actinin-3 (900 aa).

Met1 carries the post-translational modification N-acetylmethionine. The disordered stretch occupies residues 1–26 (MMMVMQPEGLGAGEGPFSGGGGGEYM). The tract at residues 1–260 (MMMVMQPEGL…IMTYVSCFYH (260 aa)) is actin-binding. A compositionally biased stretch (gly residues) spans 10–24 (LGAGEGPFSGGGGGE). Calponin-homology (CH) domains are found at residues 44 to 148 (KQQR…LRFA) and 157 to 263 (TSAK…HAFA). Spectrin repeat units follow at residues 287–397 (KLME…WLLS), 407–512 (HLAE…ALER), 522–633 (QLQL…TLQE), and 643–746 (RLRR…EVEN). EF-hand domains lie at 759-794 (EQLN…MGYD) and 795-830 (LGEV…ETAE). Ca(2+) is bound by residues Asp772, Asn776, Met778, Asp783, Asp808, and Asn810.

It belongs to the alpha-actinin family. As to quaternary structure, homodimer; antiparallel. Also forms heterodimers with ACTN2. Interacts with MYOZ1. As to expression, expression restricted to skeletal muscle fast (type 2) fibers (at protein level).

Functionally, F-actin cross-linking protein which is thought to anchor actin to a variety of intracellular structures. This is a bundling protein. This chain is Alpha-actinin-3 (Actn3), found in Mus musculus (Mouse).